The chain runs to 346 residues: tRNA N6-adenosine threonylcarbamoyltransferase (346 aa).

Residues His110 and His114 each contribute to the Fe cation site. Substrate is bound by residues 132–136, Asp165, Gly178, and Asn274; that span reads LLSGG. Asp298 serves as a coordination point for Fe cation.

It belongs to the KAE1 / TsaD family. The cofactor is Fe(2+).

It localises to the cytoplasm. It carries out the reaction L-threonylcarbamoyladenylate + adenosine(37) in tRNA = N(6)-L-threonylcarbamoyladenosine(37) in tRNA + AMP + H(+). Its function is as follows. Required for the formation of a threonylcarbamoyl group on adenosine at position 37 (t(6)A37) in tRNAs that read codons beginning with adenine. Is involved in the transfer of the threonylcarbamoyl moiety of threonylcarbamoyl-AMP (TC-AMP) to the N6 group of A37, together with TsaE and TsaB. TsaD likely plays a direct catalytic role in this reaction. The sequence is that of tRNA N6-adenosine threonylcarbamoyltransferase from Borreliella burgdorferi (strain ATCC 35210 / DSM 4680 / CIP 102532 / B31) (Borrelia burgdorferi).